The following is a 119-amino-acid chain: NADH-quinone oxidoreductase subunit A (119 aa).

The next 3 membrane-spanning stretches (helical) occupy residues 7–27 (FPVL…MFLG), 63–83 (LIAI…PWGV), and 88–108 (IGWL…VGFV).

It belongs to the complex I subunit 3 family. As to quaternary structure, NDH-1 is composed of 14 different subunits. Subunits NuoA, H, J, K, L, M, N constitute the membrane sector of the complex.

The protein localises to the cell inner membrane. It carries out the reaction a quinone + NADH + 5 H(+)(in) = a quinol + NAD(+) + 4 H(+)(out). In terms of biological role, NDH-1 shuttles electrons from NADH, via FMN and iron-sulfur (Fe-S) centers, to quinones in the respiratory chain. The immediate electron acceptor for the enzyme in this species is believed to be ubiquinone. Couples the redox reaction to proton translocation (for every two electrons transferred, four hydrogen ions are translocated across the cytoplasmic membrane), and thus conserves the redox energy in a proton gradient. In Polynucleobacter necessarius subsp. necessarius (strain STIR1), this protein is NADH-quinone oxidoreductase subunit A.